Reading from the N-terminus, the 116-residue chain is Large ribosomal subunit protein uL18 (116 aa).

It belongs to the universal ribosomal protein uL18 family. Part of the 50S ribosomal subunit; part of the 5S rRNA/L5/L18/L25 subcomplex. Contacts the 5S and 23S rRNAs.

Functionally, this is one of the proteins that bind and probably mediate the attachment of the 5S RNA into the large ribosomal subunit, where it forms part of the central protuberance. In Exiguobacterium sibiricum (strain DSM 17290 / CCUG 55495 / CIP 109462 / JCM 13490 / 255-15), this protein is Large ribosomal subunit protein uL18.